Reading from the N-terminus, the 426-residue chain is Phosphomethylpyrimidine synthase (426 aa).

Substrate-binding positions include N65, M94, Y123, H162, 184 to 186, 225 to 228, and E264; these read SRG and DGMR. H268 is a binding site for Zn(2+). Y291 contacts substrate. A Zn(2+)-binding site is contributed by H332. [4Fe-4S] cluster is bound by residues C408, C411, and C415.

This sequence belongs to the ThiC family. The cofactor is [4Fe-4S] cluster.

It carries out the reaction 5-amino-1-(5-phospho-beta-D-ribosyl)imidazole + S-adenosyl-L-methionine = 4-amino-2-methyl-5-(phosphooxymethyl)pyrimidine + CO + 5'-deoxyadenosine + formate + L-methionine + 3 H(+). It functions in the pathway cofactor biosynthesis; thiamine diphosphate biosynthesis. Functionally, catalyzes the synthesis of the hydroxymethylpyrimidine phosphate (HMP-P) moiety of thiamine from aminoimidazole ribotide (AIR) in a radical S-adenosyl-L-methionine (SAM)-dependent reaction. This is Phosphomethylpyrimidine synthase from Methanococcus maripaludis (strain C5 / ATCC BAA-1333).